Here is a 91-residue protein sequence, read N- to C-terminus: Putative membrane protein insertion efficiency factor (91 aa).

The protein belongs to the UPF0161 family.

The protein resides in the cell inner membrane. Its function is as follows. Could be involved in insertion of integral membrane proteins into the membrane. In Saccharophagus degradans (strain 2-40 / ATCC 43961 / DSM 17024), this protein is Putative membrane protein insertion efficiency factor.